Reading from the N-terminus, the 104-residue chain is L-rhamnose mutarotase (104 aa).

Y18 contributes to the substrate binding site. The active-site Proton donor is H22. Residues Y41 and 76-77 each bind substrate; that span reads WW.

The protein belongs to the rhamnose mutarotase family. Homodimer.

It localises to the cytoplasm. It carries out the reaction alpha-L-rhamnose = beta-L-rhamnose. It functions in the pathway carbohydrate metabolism; L-rhamnose metabolism. Functionally, involved in the anomeric conversion of L-rhamnose. The chain is L-rhamnose mutarotase from Clostridium beijerinckii (strain ATCC 51743 / NCIMB 8052) (Clostridium acetobutylicum).